A 374-amino-acid polypeptide reads, in one-letter code: Speckle-type POZ protein (374 aa).

Residues 31 to 161 form the MATH domain; that stretch reads KFSYMWTINN…DDKLTLFCEV (131 aa). Residues 71 to 191 form a required for nuclear localization region; sequence VNPKGLDEES…PDCRLADELG (121 aa). The 125-residue stretch at 173-297 folds into the BTB domain; sequence QNTMNMVKVP…MCEDALCTSL (125 aa). The interval 297-355 is homodimerization; sequence LSVENAAEILILADLHSADQLKTQAVDFINYHASDVMETSGWKSMVASHPHLVAEAYRS.

Belongs to the Tdpoz family. As to quaternary structure, homodimer. Part of cullin-RING-based BCR (BTB-CUL3-RBX1) E3 ubiquitin-protein ligase complexes that contain CUL3 and SPOP, plus a target protein.

Its subcellular location is the nucleus. The protein localises to the nucleus speckle. It participates in protein modification; protein ubiquitination. Its function is as follows. Component of a cullin-RING-based BCR (BTB-CUL3-RBX1) E3 ubiquitin-protein ligase complex that mediates the ubiquitination of target proteins, leading most often to their proteasomal degradation. The polypeptide is Speckle-type POZ protein (spop) (Danio rerio (Zebrafish)).